The following is a 734-amino-acid chain: Paralemmin-3 (734 aa).

Positions 19–64 form a coiled coil; the sequence is SALYRQRLEVIAEKRRLQEEIGAARRELEEEKLRVERLKRKSLRER. Disordered regions lie at residues 62-100 and 114-217; these read RERWLMDGAAEGPERPEEPASKDPQSPEGQAQARIRNLE and QSAS…LGVS. Residues 73-82 are compositionally biased toward basic and acidic residues; that stretch reads GPERPEEPAS. The stretch at 90–116 forms a coiled coil; that stretch reads GQAQARIRNLEDSLFSLQSQLQLLQSA. A phosphoserine mark is found at Ser-139, Ser-158, Ser-167, Ser-170, and Ser-172. The segment covering 186-198 has biased composition (polar residues); the sequence is RPSTEAIGTSSEA. Residue Ser-270 is modified to Phosphoserine. The span at 297-308 shows a compositional bias: basic and acidic residues; the sequence is DVTGESGRDAEA. Disordered regions lie at residues 297–347, 374–400, and 413–709; these read DVTG…PGVE, PQGAGSAGEPEALIGAQPRGGEASWEV, and EKGR…YAPA. A Phosphothreonine modification is found at Thr-311. Positions 315–336 are enriched in basic and acidic residues; it reads RLQEQFEAETCRKEEGASRDSL. Phosphoserine is present on residues Ser-332 and Ser-335. 8 stretches are compositionally biased toward basic and acidic residues: residues 413-427, 435-452, 462-484, 494-531, 540-561, 571-582, 589-607, and 630-647; these read EKGRAEKLGAEREDG, TQGREENEAEKVERKDSE, DEEKWEVKTTEGEESLEVEKGGE, LVTEKKPEGSLETERKGSEMPLDQEKDGEGSLDRESKT, IGDKSSLDETKGSKKLLDEKTG, EGSKKLLDREAD, EVDKTSGAKDDVSPEEQGK, and DEPRSEEQGQQEPEKQEG. At Ser-451 the chain carries Phosphoserine. Ser-601 carries the phosphoserine modification. At Ser-721 the chain carries Phosphoserine. 2 S-palmitoyl cysteine lipidation sites follow: Cys-728 and Cys-730. A Cysteine methyl ester modification is found at Cys-731. Cys-731 carries S-farnesyl cysteine lipidation. Residues 732–734 constitute a propeptide, removed in mature form; the sequence is VVM.

Belongs to the paralemmin family. As to quaternary structure, interacts with SIGIRR. Post-translationally, palmitoylated on Cys-728 and Cys-730 and prenylated on Cys-731; which is required for membrane association.

Its subcellular location is the cytoplasm. It is found in the cell membrane. Functionally, ATP-binding protein, which may act as a adapter in the Toll-like receptor (TLR) signaling. The chain is Paralemmin-3 (Palm3) from Mus musculus (Mouse).